The primary structure comprises 457 residues: Prenyltransferase ucdE (457 aa).

7 residues coordinate dimethylallyl diphosphate: R106, K198, K277, Y279, Y382, Y447, and Y451.

It belongs to the tryptophan dimethylallyltransferase family.

The protein operates within secondary metabolite biosynthesis. Nonribosomal peptide synthetase that mediates the biosynthesis of usterphenyllins and uscandidusins, p-terphenyl derivatives. Within the pathway, ucdE prenylates position C-5 of ring A of 3,15-dihydroxyterphenyllin to produce forms usterphenyllin B. UcdE further prenylates position C-14 of ring C of usterphenyllin B to form usterphenyllin A. The pathway begin with the biosynthesis of 4-hydroxyphenylpyruvate (HPPA) from L-tyrosine, possibly by the aminotransferase ucdG. The nonribosomal peptide synthetase ucdA then condenses two HPPA units to produce atromentin. The key step in this pathway is the reduction and dehydration of atromentin to form a terphenyl triol intermediate, performed by the NAD-dependent dehydrogenase ucdB. Further O-methylation by the methyltransferase ucdC forms terphenyllin carrying two methoxy moieties at C-9 and C-12, and subsequent dihydroxylation at C-3 of ring A and C-15 of ring C by the flavin-dependent oxygenase ucdD leads to 3,15-dihydroxyterphenyllin. Prenylation by ucdE at position C-5 of ring A forms usterphenyllin B, and is followed by a second prenylation at position C-14 of ring C to form usterphenyllin A. The following furan ring formation that leads to uscandidusins A and B was proven to be an unexpected spontaneous non-enzymatic reaction. This is Prenyltransferase ucdE from Aspergillus ustus.